The primary structure comprises 662 residues: Mitochondrial Rho GTPase 1 (662 aa).

Residues 1-634 lie on the Cytoplasmic side of the membrane; sequence MTKETIRVVI…AKDVDYRQTA (634 aa). One can recognise a Miro 1 domain in the interval 3-185; the sequence is KETIRVVICG…FYLCQRAITH (183 aa). GTP contacts are provided by residues 12-19, 62-64, and 116-119; these read GDEGVGKS, DTS, and NKCD. 2 EF-hand domains span residues 201 to 236 and 330 to 365; these read LAVMALKRIFLLSDLNQDSYLDDNEILGLQKKCFNK and KGYRFLVDIFLKFDIDNDGGLNNQELHRLFKCTPGL. Ca(2+) contacts are provided by D214, N216, D218, Y220, E225, D343, D345, D347, and E354. The 166-residue stretch at 446–611 folds into the Miro 2 domain; that stretch reads RKVFNCFVIG…FIKITEAALD (166 aa). Residues 455–462, 491–495, and 560–563 each bind GTP; these read GKPCCGKS, ELKGG, and SKAD. The helical; Anchor for type IV membrane protein transmembrane segment at 635–655 threads the bilayer; the sequence is LIFGSTVGFVALCSFTLMKLF. Over 656-662 the chain is Mitochondrial intermembrane; sequence KSSKFSK.

The protein belongs to the mitochondrial Rho GTPase family.

The protein resides in the mitochondrion outer membrane. Mitochondrial GTPase involved in mitochondrial trafficking. Probably involved in control of anterograde transport of mitochondria and their subcellular distribution. In Saccharomyces cerevisiae (strain ATCC 204508 / S288c) (Baker's yeast), this protein is Mitochondrial Rho GTPase 1 (GEM1).